We begin with the raw amino-acid sequence, 114 residues long: Large ribosomal subunit protein uL22 (114 aa).

It belongs to the universal ribosomal protein uL22 family. In terms of assembly, part of the 50S ribosomal subunit.

Functionally, this protein binds specifically to 23S rRNA; its binding is stimulated by other ribosomal proteins, e.g. L4, L17, and L20. It is important during the early stages of 50S assembly. It makes multiple contacts with different domains of the 23S rRNA in the assembled 50S subunit and ribosome. Its function is as follows. The globular domain of the protein is located near the polypeptide exit tunnel on the outside of the subunit, while an extended beta-hairpin is found that lines the wall of the exit tunnel in the center of the 70S ribosome. The polypeptide is Large ribosomal subunit protein uL22 (Mycoplasmopsis agalactiae (strain NCTC 10123 / CIP 59.7 / PG2) (Mycoplasma agalactiae)).